The chain runs to 257 residues: Acetylglutamate kinase (257 aa).

Substrate contacts are provided by residues 41 to 42, Arg63, and Asn158; that span reads GG.

This sequence belongs to the acetylglutamate kinase family. ArgB subfamily.

The protein resides in the cytoplasm. It carries out the reaction N-acetyl-L-glutamate + ATP = N-acetyl-L-glutamyl 5-phosphate + ADP. Its pathway is amino-acid biosynthesis; L-arginine biosynthesis; N(2)-acetyl-L-ornithine from L-glutamate: step 2/4. Functionally, catalyzes the ATP-dependent phosphorylation of N-acetyl-L-glutamate. This chain is Acetylglutamate kinase, found in Phocaeicola vulgatus (strain ATCC 8482 / DSM 1447 / JCM 5826 / CCUG 4940 / NBRC 14291 / NCTC 11154) (Bacteroides vulgatus).